Consider the following 263-residue polypeptide: Ribosomal RNA small subunit methyltransferase A (263 aa).

S-adenosyl-L-methionine-binding residues include His13, Leu15, Gly40, Glu61, Asp86, and Asn105.

This sequence belongs to the class I-like SAM-binding methyltransferase superfamily. rRNA adenine N(6)-methyltransferase family. RsmA subfamily.

The protein localises to the cytoplasm. It catalyses the reaction adenosine(1518)/adenosine(1519) in 16S rRNA + 4 S-adenosyl-L-methionine = N(6)-dimethyladenosine(1518)/N(6)-dimethyladenosine(1519) in 16S rRNA + 4 S-adenosyl-L-homocysteine + 4 H(+). In terms of biological role, specifically dimethylates two adjacent adenosines (A1518 and A1519) in the loop of a conserved hairpin near the 3'-end of 16S rRNA in the 30S particle. May play a critical role in biogenesis of 30S subunits. The sequence is that of Ribosomal RNA small subunit methyltransferase A from Dichelobacter nodosus (strain VCS1703A).